Here is a 355-residue protein sequence, read N- to C-terminus: Lipopolysaccharide heptosyltransferase 1 (355 aa).

Residues threonine 186, threonine 187, lysine 191, glutamate 221, aspartate 260, threonine 261, glycine 262, and histidine 265 each coordinate ADP-L-glycero-beta-D-manno-heptose.

The protein belongs to the glycosyltransferase 9 family.

The protein resides in the cell inner membrane. The catalysed reaction is an alpha-Kdo-(2-&gt;4)-alpha-Kdo-(2-&gt;6)-lipid A + ADP-L-glycero-beta-D-manno-heptose = an L-alpha-D-Hep-(1-&gt;5)-[alpha-Kdo-(2-&gt;4)]-alpha-Kdo-(2-&gt;6)-lipid A + ADP + H(+). The protein operates within bacterial outer membrane biogenesis; LPS core biosynthesis. Its function is as follows. Glycosyltransferase involved in the biosynthesis of the core oligosaccharide region of lipopolysaccharide (LPS). Catalyzes the addition of the first heptose unit to one 3-deoxy-D-manno-octulosonic acid (Kdo) residue of the Kdo2-lipid A module. This Pseudomonas aeruginosa (strain ATCC 15692 / DSM 22644 / CIP 104116 / JCM 14847 / LMG 12228 / 1C / PRS 101 / PAO1) protein is Lipopolysaccharide heptosyltransferase 1.